We begin with the raw amino-acid sequence, 185 residues long: Probable chorismate pyruvate-lyase (185 aa).

The substrate site is built by arginine 80, leucine 118, and glutamate 170.

This sequence belongs to the UbiC family.

Its subcellular location is the cytoplasm. It carries out the reaction chorismate = 4-hydroxybenzoate + pyruvate. Its pathway is cofactor biosynthesis; ubiquinone biosynthesis. Functionally, removes the pyruvyl group from chorismate, with concomitant aromatization of the ring, to provide 4-hydroxybenzoate (4HB) for the ubiquinone pathway. The chain is Probable chorismate pyruvate-lyase from Pseudomonas putida (strain ATCC 47054 / DSM 6125 / CFBP 8728 / NCIMB 11950 / KT2440).